The following is a 374-amino-acid chain: MLDRDVGPTPMYPPSYMEPGIGRHTPYGNQTDYRIFELNKRLQNWTEQDCDNLWWDAFTTEFFEDDAMLTITFCLEDGPKRYTIGRTLIPRYFRSIFEGGATELFYVLKHPKESFHNNFVSLDCDQCTMVTQNGKPMFTQVCVEGRLYLEFMFDDMMRIKTWHFSIRQHREVVPRSILAMHAQDPQMLDQLSKNITRCGLSNSTLNYLRLCVILEPMQELMSRHKTYSLSPRDCLKTCLFQKWQRMVAPPAEPARQAPNKRRKRKMSGGSTMSSGGGNNNNSNSKKKSPASSFALSSQDVMVVGEPTLMGGEFGDEDERLITRLENTQFDAANGIDDEDSFNSSPTMGTNSPWNSKAPSSQQGKNDNPSSQSSQ.

3 disordered regions span residues 1 to 24, 249 to 297, and 322 to 374; these read MLDR…IGRH, PPAE…ALSS, and TRLE…QSSQ. Positions 267–297 are enriched in low complexity; it reads SGGSTMSSGGGNNNNSNSKKKSPASSFALSS. In terms of domain architecture, LIM interaction domain (LID) spans 299 to 338; it reads DVMVVGEPTLMGGEFGDEDERLITRLENTQFDAANGIDDE. Positions 341-374 are enriched in polar residues; the sequence is FNSSPTMGTNSPWNSKAPSSQQGKNDNPSSQSSQ.

The protein belongs to the LDB family. As to expression, expressed ubiquitously in the embryo and adult.

Its subcellular location is the nucleus. Functionally, binds to the LIM domain of a wide variety of LIM domain-containing transcription factors. The polypeptide is LIM domain-binding protein 1-A (ldb1a) (Danio rerio (Zebrafish)).